A 37-amino-acid polypeptide reads, in one-letter code: Cytochrome b6-f complex subunit 5 (37 aa).

The helical transmembrane segment at 5–25 (LLSGVVLGLILVTLSGLFFAA) threads the bilayer.

It belongs to the PetG family. The 4 large subunits of the cytochrome b6-f complex are cytochrome b6, subunit IV (17 kDa polypeptide, PetD), cytochrome f and the Rieske protein, while the 4 small subunits are PetG, PetL, PetM and PetN. The complex functions as a dimer.

It localises to the cellular thylakoid membrane. Component of the cytochrome b6-f complex, which mediates electron transfer between photosystem II (PSII) and photosystem I (PSI), cyclic electron flow around PSI, and state transitions. PetG is required for either the stability or assembly of the cytochrome b6-f complex. The sequence is that of Cytochrome b6-f complex subunit 5 from Trichodesmium erythraeum (strain IMS101).